Here is a 531-residue protein sequence, read N- to C-terminus: UDP-glucuronosyltransferase 1A3 (531 aa).

An N-terminal signal peptide occupies residues 1–25 (MGIQGFLQKLSGLLLLLCALPWAEG). 4 N-linked (GlcNAc...) asparagine glycosylation sites follow: N116, N139, N293, and N431. Residues 489–505 (VIGFLLAIVLTVVFIVY) traverse the membrane as a helical segment.

The protein belongs to the UDP-glycosyltransferase family. Homodimers. Homooligomer. Interacts with UGT1A1, UGT1A4, UGT1A6, UGT1A7, UGT1A8, UGT1A9 and UGT1A10 to form heterodimers.

Its subcellular location is the endoplasmic reticulum membrane. The enzyme catalyses glucuronate acceptor + UDP-alpha-D-glucuronate = acceptor beta-D-glucuronoside + UDP + H(+). It carries out the reaction 17beta-estradiol + UDP-alpha-D-glucuronate = 17beta-estradiol 3-O-(beta-D-glucuronate) + UDP + H(+). The catalysed reaction is 17beta-estradiol + UDP-alpha-D-glucuronate = 17beta-estradiol 17-O-(beta-D-glucuronate) + UDP + H(+). It catalyses the reaction 17alpha-estradiol + UDP-alpha-D-glucuronate = 17alpha-estradiol 3-O-(beta-D-glucuronate) + UDP + H(+). The enzyme catalyses estrone + UDP-alpha-D-glucuronate = estrone 3-O-(beta-D-glucuronate) + UDP + H(+). It carries out the reaction chenodeoxycholate + UDP-alpha-D-glucuronate = chenodeoxycholoyl-24-O-(beta-D-glucuronate) + UDP. The catalysed reaction is deoxycholate + UDP-alpha-D-glucuronate = deoxycholoyl-24-O-(beta-D-glucuronate) + UDP. It catalyses the reaction lithocholate + UDP-alpha-D-glucuronate = lithocholoyl-24-O-(beta-D-glucuronate) + UDP. The enzyme catalyses hyodeoxycholate + UDP-alpha-D-glucuronate = hyodeoxycholoyl-24-O-(beta-D-glucuronate) + UDP. It carries out the reaction hyocholate + UDP-alpha-D-glucuronate = hyocholoyl-24-O-(beta-D-glucuronate) + UDP. The catalysed reaction is calcidiol + UDP-alpha-D-glucuronate = calcidiol 25-O-(beta-D-glucuronide) + UDP + H(+). It catalyses the reaction losartan + UDP-alpha-D-glucuronate = losartan-2-N-beta-D-glucuronide + UDP. The enzyme catalyses candesartan + UDP-alpha-D-glucuronate = candesartan-2-N-beta-D-glucuronide + UDP. It carries out the reaction zolasartan + UDP-alpha-D-glucuronate = zolarsartan-2-N-beta-D-glucuronide + UDP. The catalysed reaction is (E)-ferulate + UDP-alpha-D-glucuronate = (E)-4-O-(beta-D-glucuronosyl)-ferulate + UDP + H(+). It catalyses the reaction (E)-ferulate + UDP-alpha-D-glucuronate = (E)-ferulic acid beta-D-glucuronate ester + UDP. UDP-glucuronosyltransferase (UGT) that catalyzes phase II biotransformation reactions in which lipophilic substrates are conjugated with glucuronic acid to increase the metabolite's water solubility, thereby facilitating excretion into either the urine or bile. Essential for the elimination and detoxification of drugs, xenobiotics and endogenous compounds. Catalyzes the glucuronidation of endogenous estrogen hormones such as estradiol and estrone. Contributes to bile acid (BA) detoxification by catalyzing the glucuronidation of BA substrates, which are natural detergents for dietary lipids absorption. Involved in the glucuronidation of calcidiol, which is the major circulating form of vitamin D3, essential for the regulation of calcium and phosphate homeostasis. Involved in the glucuronidation of the phytochemical ferulic acid at the phenolic or the carboxylic acid group. Involved in the glucuronidation of the AGTR1 angiotensin receptor antagonists losartan, candesartan and zolarsartan, which can inhibit the effect of angiotensin II. The protein is UDP-glucuronosyltransferase 1A3 of Rattus norvegicus (Rat).